A 211-amino-acid chain; its full sequence is uncharacterized protein (211 aa).

Positions 105–143 (IEENEFDKVRKSSDKLINEIEKTKSSLREDVKTALSEVR) form a coiled coil. A helical transmembrane segment spans residues 191–211 (QWFTGFVGVVSSVVLIILFYF).

The protein belongs to the CCDC90 family.

Its subcellular location is the mitochondrion. The protein resides in the membrane. This is an uncharacterized protein from Schizosaccharomyces pombe (strain 972 / ATCC 24843) (Fission yeast).